The following is a 162-amino-acid chain: Phosphopantetheine adenylyltransferase (162 aa).

T10 contacts substrate. ATP-binding positions include 10 to 11 (TF) and H18. Substrate contacts are provided by K42, L74, and R88. Residues 89 to 91 (GLR), E99, and 124 to 130 (FSCISST) contribute to the ATP site.

Belongs to the bacterial CoaD family. As to quaternary structure, homohexamer. It depends on Mg(2+) as a cofactor.

It localises to the cytoplasm. It catalyses the reaction (R)-4'-phosphopantetheine + ATP + H(+) = 3'-dephospho-CoA + diphosphate. It functions in the pathway cofactor biosynthesis; coenzyme A biosynthesis; CoA from (R)-pantothenate: step 4/5. Functionally, reversibly transfers an adenylyl group from ATP to 4'-phosphopantetheine, yielding dephospho-CoA (dPCoA) and pyrophosphate. This Francisella tularensis subsp. mediasiatica (strain FSC147) protein is Phosphopantetheine adenylyltransferase.